We begin with the raw amino-acid sequence, 1219 residues long: Disease resistance-like protein DSC1 (1219 aa).

In terms of domain architecture, TIR spans 9-176 (AEFDVFLSFR…EIAVDTFKKL (168 aa)). E83 is a catalytic residue. The region spanning 197-446 (LEKLLSWEDL…DIACFFRSEN (250 aa)) is the NB-ARC domain. 216 to 222 (GMVGIGK) contributes to the ATP binding site. LRR repeat units lie at residues 468–493 (LVDKCLITLSDNRIEMHDMLQTMAKE), 538–563 (TDKIRGIFLDTSKLRAMRLSAKAFQG), 597–619 (PNELTYLHWHGYPLQSIPLDFDP), 620–642 (KNLVDLKLPHSQLEEIWDDEKDV), 665–689 (AHNLERLNLEGCTSLKKLPSTINCL), 690–713 (EKLIYLNLRDCTSLRSLPKGIKTQ), 733–757 (SENVEVLLLDGTVIKSLPESIQTFR), 759–780 (LALLNLKNCKKLKHLSSDLYKL), 804–827 (MESLEILLMDDTSITEMPKMMHLS), 854–877 (CSRLTDLYLSRCSLYKLPDNIGGL), and 878–899 (SSLQSLCLSGNNIENLPESFNQ).

It belongs to the disease resistance NB-LRR family. As to quaternary structure, interacts with CAMTA3 and DSC2.

It catalyses the reaction NAD(+) + H2O = ADP-D-ribose + nicotinamide + H(+). Functionally, TIR-NB-LRR receptor-like protein involved in plant defense. Acts as a trigger of hypersensitive response (HR). Functions as a guard of CAMTA3, a negative regulator of immunity, during pathogen infection. In Arabidopsis thaliana (Mouse-ear cress), this protein is Disease resistance-like protein DSC1.